Here is a 269-residue protein sequence, read N- to C-terminus: Type 4 prepilin-like proteins leader peptide-processing enzyme (269 aa).

The next 7 membrane-spanning stretches (helical) occupy residues 13–33, 102–122, 124–144, 147–167, 178–198, 210–230, and 249–269; these read MPVL…VVIW, YPLV…VWPE, GWAL…VIDL, QWLP…AAWA, VTGV…AGIV, LLFA…VALI, and LPFG…QALF.

The protein belongs to the peptidase A24 family.

It is found in the cell inner membrane. The catalysed reaction is Typically cleaves a -Gly-|-Phe- bond to release an N-terminal, basic peptide of 5-8 residues from type IV prepilin, and then N-methylates the new N-terminal amino group, the methyl donor being S-adenosyl-L-methionine.. Functionally, cleaves type-4 fimbrial leader sequence and methylates the N-terminal (generally Phe) residue. The sequence is that of Type 4 prepilin-like proteins leader peptide-processing enzyme from Escherichia coli O78:H11 (strain H10407 / ETEC).